We begin with the raw amino-acid sequence, 453 residues long: Serine/threonine-protein phosphatase 2A 55 kDa regulatory subunit B delta isoform (453 aa).

WD repeat units follow at residues 32 to 71 (AEAD…KGRA), 97 to 138 (EIEE…KRAE), 181 to 219 (AHTY…RSFN), and 230 to 270 (ELTE…LCDR). At serine 285 the chain carries Phosphoserine. 3 WD repeats span residues 289 to 327 (EIIS…RPVE), 344 to 385 (ENDC…DVTL), and 420 to 452 (DFNK…QDKI). Residue tyrosine 305 is modified to Phosphotyrosine. Threonine 308 is modified (phosphothreonine).

It belongs to the phosphatase 2A regulatory subunit B family. PP2A consists of a common heterodimeric core enzyme, composed of a 36 kDa catalytic subunit (subunit C) and a 65 kDa constant regulatory subunit (PR65 or subunit A), that associates with a variety of regulatory subunits. Proteins that associate with the core dimer include three families of regulatory subunits B (the R2/B/PR55/B55, R3/B''/PR72/PR130/PR59 and R5/B'/B56 families), the 48 kDa variable regulatory subunit, viral proteins, and cell signaling molecules. Interacts with IER5.

The protein localises to the cytoplasm. Functionally, substrate-recognition subunit of protein phosphatase 2A (PP2A) that plays a key role in cell cycle by controlling mitosis entry and exit. Involved in chromosome clustering during late mitosis by mediating dephosphorylation of MKI67. The activity of PP2A complexes containing PPP2R2D (PR55-delta) fluctuate during the cell cycle: the activity is high in interphase and low in mitosis. The sequence is that of Serine/threonine-protein phosphatase 2A 55 kDa regulatory subunit B delta isoform from Mus musculus (Mouse).